Reading from the N-terminus, the 212-residue chain is Putative 3-methyladenine DNA glycosylase (212 aa).

This sequence belongs to the DNA glycosylase MPG family.

The chain is Putative 3-methyladenine DNA glycosylase from Psychrobacter cryohalolentis (strain ATCC BAA-1226 / DSM 17306 / VKM B-2378 / K5).